The chain runs to 488 residues: Bile acid receptor (488 aa).

A Glycyl lysine isopeptide (Lys-Gly) (interchain with G-Cter in SUMO1) cross-link involves residue Lys-133. Positions 135–210 form a DNA-binding region, nuclear receptor; that stretch reads DELCVVCGDR…MGMLAECMYT (76 aa). Residues 138–158 form an NR C4-type zinc finger; that stretch reads CVVCGDRASGYHYNALTCEGC. Phosphoserine; by PKC/PRKCA is present on residues Ser-146 and Ser-165. Lys-168 is modified (N6-acetyllysine; by EP300). An NR C4-type zinc finger spans residues 174-198; it reads CKNGGNCVMDMYMRRKCQECRLRKC. Position 221 is an N6-methyllysine; by SETD7 (Lys-221). Lys-228 carries the post-translational modification N6-acetyllysine; by EP300. The 225-residue stretch at 264 to 488 folds into the NR LBD domain; the sequence is DQQTLLDYIM…PLLCEIWDVQ (225 aa). Residue Lys-291 forms a Glycyl lysine isopeptide (Lys-Gly) (interchain with G-Cter in SUMO1) linkage. Residues Arg-347, Tyr-377, and Tyr-385 each coordinate chenodeoxycholate. Phosphothreonine; by PKC/PRKCZ is present on Thr-458. His-463 is a chenodeoxycholate binding site.

Belongs to the nuclear hormone receptor family. NR1 subfamily. In terms of assembly, heterodimer with RXRA; the heterodimerization enhances the binding affinity for LXXLL motifs from coactivators. Binds DNA predominantly as a heterodimer with RXRA. After activation by agonist binding interacts with coactivators. Interacts with PPARGC1A, SMARCA4 and EP300. Interacts with NCOA1, NCOA2, CARM1, SETD7, PRMT1, GPS2, SMARCA4 and MED1. Interacts with XRCC5 and XRCC6; decreasing NR1H4/FXR transactivation activity towards ABCB11/BSEP. Interacts with PAGR1 and NCOA6; indicative for an association with an MLL2/MLL3 complex (ASCOM). Interacts with NR5A2. In terms of processing, acetylated by EP300. Lys-228 as is the major acetylation site for EP300; the dynamicly regulated acetylation inhibits heterodimerization with RXRA and transactivation activity. Deacetylated by SIRT1. Elevated acetylation levels are found in metabolic disease states (mouse models of obesity and type II diabetes). Methylation may increase transactivation of target genes. Post-translationally, phosphorylation by PKC/PRKCA increases transactivation activity by promoting association with PPARGC1A. In terms of processing, sumoylated upon ligand binding. Expressed in liver and kidney. Expressed in pancreatic beta cells and macrophages. Expressed in the villus epithelium in adult ileum, with highest expression in the intervillus regions. Expression in colon is reduced by inflammation.

The protein localises to the nucleus. Functionally, ligand-activated transcription factor. Receptor for bile acids (BAs) such as chenodeoxycholic acid (CDCA), lithocholic acid, deoxycholic acid (DCA) and allocholic acid (ACA). Plays a essential role in BA homeostasis through the regulation of genes involved in BA synthesis, conjugation and enterohepatic circulation. Also regulates lipid and glucose homeostasis and is involved in innate immune response. The FXR-RXR heterodimer binds predominantly to farnesoid X receptor response elements (FXREs) containing two inverted repeats of the consensus sequence 5'-AGGTCA-3' in which the monomers are spaced by 1 nucleotide (IR-1) but also to tandem repeat DR1 sites with lower affinity, and can be activated by either FXR or RXR-specific ligands. It is proposed that monomeric nuclear receptors such as NR5A2/LRH-1 bound to coregulatory nuclear responsive element (NRE) halfsites located in close proximity to FXREs modulate transcriptional activity. In the liver activates transcription of the corepressor NR0B2 thereby indirectly inhibiting CYP7A1 and CYP8B1 (involved in BA synthesis) implicating at least in part histone demethylase KDM1A resulting in epigenomic repression, and SLC10A1/NTCP (involved in hepatic uptake of conjugated BAs). Activates transcription of the repressor MAFG (involved in regulation of BA synthesis). Activates transcription of SLC27A5/BACS and BAAT (involved in BA conjugation), ABCB11/BSEP (involved in bile salt export) by directly recruiting histone methyltransferase CARM1, and ABCC2/MRP2 (involved in secretion of conjugated BAs) and ABCB4 (involved in secretion of phosphatidylcholine in the small intestine). In ileal enterocytes activates FABP6/IBABP (involved in cytosolic transport), SLC51A/OSTA and SLC51B/OSTB (involved in secretion of conjugated BAs to the portal blood), and repressor NR0B2/SHP thereby indirectly inhibiting SLC10A2/ASBT (involved in BA uptake). In the intestine activates FGF15 expression and secretion leading to hepatic CYP7A1 repression; the function also involves the coordinated induction of hepatic KLB/beta-klotho expression. Transcriptional activation of FABP6/IBAP and SCD1 but not of ABCB11 is isoform-specific. Regulates transcription of liver UGT2B4 and SULT2A1 involved in BA detoxification; binding to the UGT2B4 promoter seems to imply a monomeric transactivation independent of RXRA. Modulates lipid homeostasis by activating liver NR0B2/SHP-mediated repression of SREBF1 isoform SREBP-1C (involved in de novo lipogenesis), expression of PLTP (involved in HDL formation), SCARB1 (involved in HDL hepatic uptake), APOE, APOC1, APOC4, VLDLR and SDC1 (involved in the hepatic uptake of LDL and IDL remnants), and inhibiting expression of MTTP (involved in VLDL assembly). Increases expression of APOC2 (promoting lipoprotein lipase activity implicated in triglyceride clearance). Transrepresses APOA1 probably involving a monomeric competition with NR2A1 for binding to a DR1 element. Also reduces triglyceride clearance by inhibiting expression of ANGPTL3 and APOC3 (both involved in inhibition of lipoprotein lipase). Involved in glucose homeostasis by modulating hepatic gluconeogenesis through activation of NR0B2/SHP-mediated repression of respective genes. Modulates glycogen synthesis (inducing phosphorylation of glycogen synthase kinase-3). Modulates glucose-stimulated insulin secretion and is involved in insulin resistance. Involved in intestinal innate immunity. Plays a role in protecting the distal small intestine against bacterial overgrowth and preservation of the epithelial barrier. Down-regulates inflammatory cytokine expression in several types of immune cells including macrophages and mononuclear cells. Mediates transrepression of TLR4-induced cytokine expression; the function seems to require its sumoylation and prevents N-CoR nuclear receptor corepressor clearance from target genes such as IL1B and NOS2. Involved in the TLR9-mediated protective mechanism in intestinal inflammation. Plays a anti-inflammatory role in liver inflammation; proposed to inhibit pro-inflammatory (but not antiapoptotic) NF-kappa-B signaling. Its function is as follows. Activates transcription of IBAP and SDC1. The polypeptide is Bile acid receptor (Nr1h4) (Mus musculus (Mouse)).